Reading from the N-terminus, the 426-residue chain is Phosphoribosylamine--glycine ligase (426 aa).

Residues 107-313 enclose the ATP-grasp domain; sequence KDFMQKYGVK…FLNVINSALN (207 aa). Residue 133-194 coordinates ATP; sequence LDKISYPVVI…EEFLDGVEIS (62 aa). Mg(2+) is bound by residues Glu283 and Asn285.

This sequence belongs to the GARS family. It depends on Mg(2+) as a cofactor. Mn(2+) is required as a cofactor.

The enzyme catalyses 5-phospho-beta-D-ribosylamine + glycine + ATP = N(1)-(5-phospho-beta-D-ribosyl)glycinamide + ADP + phosphate + H(+). It participates in purine metabolism; IMP biosynthesis via de novo pathway; N(1)-(5-phospho-D-ribosyl)glycinamide from 5-phospho-alpha-D-ribose 1-diphosphate: step 2/2. The polypeptide is Phosphoribosylamine--glycine ligase (Fusobacterium nucleatum subsp. nucleatum (strain ATCC 25586 / DSM 15643 / BCRC 10681 / CIP 101130 / JCM 8532 / KCTC 2640 / LMG 13131 / VPI 4355)).